Reading from the N-terminus, the 199-residue chain is Octanoyltransferase (199 aa).

The region spanning 27–199 (SNSCDELWLL…FVQYFLTQFK (173 aa)) is the BPL/LPL catalytic domain. Substrate-binding positions include 66 to 73 (RGGQVTYH), 133 to 135 (SIG), and 146 to 148 (GIA). Residue Cys-164 is the Acyl-thioester intermediate of the active site.

It belongs to the LipB family.

It localises to the cytoplasm. The catalysed reaction is octanoyl-[ACP] + L-lysyl-[protein] = N(6)-octanoyl-L-lysyl-[protein] + holo-[ACP] + H(+). It participates in protein modification; protein lipoylation via endogenous pathway; protein N(6)-(lipoyl)lysine from octanoyl-[acyl-carrier-protein]: step 1/2. Functionally, catalyzes the transfer of endogenously produced octanoic acid from octanoyl-acyl-carrier-protein onto the lipoyl domains of lipoate-dependent enzymes. Lipoyl-ACP can also act as a substrate although octanoyl-ACP is likely to be the physiological substrate. The sequence is that of Octanoyltransferase from Legionella pneumophila (strain Corby).